Consider the following 483-residue polypeptide: Glutamyl-tRNA(Gln) amidotransferase subunit A (483 aa).

Residues lysine 76 and serine 151 each act as charge relay system in the active site. Serine 175 functions as the Acyl-ester intermediate in the catalytic mechanism.

This sequence belongs to the amidase family. GatA subfamily. As to quaternary structure, heterotrimer of A, B and C subunits.

It catalyses the reaction L-glutamyl-tRNA(Gln) + L-glutamine + ATP + H2O = L-glutaminyl-tRNA(Gln) + L-glutamate + ADP + phosphate + H(+). Its function is as follows. Allows the formation of correctly charged Gln-tRNA(Gln) through the transamidation of misacylated Glu-tRNA(Gln) in organisms which lack glutaminyl-tRNA synthetase. The reaction takes place in the presence of glutamine and ATP through an activated gamma-phospho-Glu-tRNA(Gln). The chain is Glutamyl-tRNA(Gln) amidotransferase subunit A from Pseudomonas syringae pv. syringae (strain B728a).